Here is a 208-residue protein sequence, read N- to C-terminus: NADH-ubiquinone oxidoreductase chain 4 (208 aa).

The next 6 helical transmembrane spans lie at 23–43 (VWIN…NLLW), 60–80 (PLSA…LLAS), 93–113 (KLYI…FSAN), 114–134 (ELIM…IIIT), 147–167 (IYFL…LIYI), and 185–205 (PINQ…AFMV).

Belongs to the complex I subunit 4 family. In terms of assembly, core subunit of respiratory chain NADH dehydrogenase (Complex I) which is composed of 45 different subunits.

Its subcellular location is the mitochondrion inner membrane. The enzyme catalyses a ubiquinone + NADH + 5 H(+)(in) = a ubiquinol + NAD(+) + 4 H(+)(out). Core subunit of the mitochondrial membrane respiratory chain NADH dehydrogenase (Complex I) which catalyzes electron transfer from NADH through the respiratory chain, using ubiquinone as an electron acceptor. Essential for the catalytic activity and assembly of complex I. This is NADH-ubiquinone oxidoreductase chain 4 (MT-ND4) from Microtus pennsylvanicus (Meadow vole).